A 217-amino-acid chain; its full sequence is Large ribosomal subunit protein uL4 (217 aa).

A disordered region spans residues 46–103; that stretch reads KRQGTHATKTRGMVSGGGRKPFRQKGTGRARQGSIRAPHFTGGGTVHGPQPRDYSQRT.

The protein belongs to the universal ribosomal protein uL4 family. As to quaternary structure, part of the 50S ribosomal subunit.

Functionally, one of the primary rRNA binding proteins, this protein initially binds near the 5'-end of the 23S rRNA. It is important during the early stages of 50S assembly. It makes multiple contacts with different domains of the 23S rRNA in the assembled 50S subunit and ribosome. Its function is as follows. Forms part of the polypeptide exit tunnel. In Corynebacterium jeikeium (strain K411), this protein is Large ribosomal subunit protein uL4.